The primary structure comprises 502 residues: Glycerol kinase (502 aa).

Thr14 contacts ADP. Residues Thr14, Thr15, and Ser16 each contribute to the ATP site. Residue Thr14 participates in sn-glycerol 3-phosphate binding. Arg18 is an ADP binding site. Residues Arg84, Glu85, Tyr136, and Asp246 each coordinate sn-glycerol 3-phosphate. Arg84, Glu85, Tyr136, Asp246, and Gln247 together coordinate glycerol. Residues Thr268 and Gly311 each coordinate ADP. Residues Thr268, Gly311, Gln315, and Gly412 each contribute to the ATP site. Positions 412 and 416 each coordinate ADP.

The protein belongs to the FGGY kinase family. As to quaternary structure, homotetramer and homodimer (in equilibrium). Heterodimer with EIIA-Glc. Binds 1 zinc ion per glycerol kinase EIIA-Glc dimer. The zinc ion is important for dimerization.

It catalyses the reaction glycerol + ATP = sn-glycerol 3-phosphate + ADP + H(+). The protein operates within polyol metabolism; glycerol degradation via glycerol kinase pathway; sn-glycerol 3-phosphate from glycerol: step 1/1. Activity of this regulatory enzyme is affected by several metabolites. Allosterically and non-competitively inhibited by fructose 1,6-bisphosphate (FBP) and unphosphorylated phosphocarrier protein EIIA-Glc (III-Glc), an integral component of the bacterial phosphotransferase (PTS) system. Key enzyme in the regulation of glycerol uptake and metabolism. Catalyzes the phosphorylation of glycerol to yield sn-glycerol 3-phosphate. This chain is Glycerol kinase, found in Salmonella heidelberg (strain SL476).